A 320-amino-acid chain; its full sequence is Malate dehydrogenase (320 aa).

Residues 10-15 and Asp34 each bind NAD(+); that span reads GSGMIG. Substrate contacts are provided by Arg83 and Arg89. NAD(+)-binding positions include Asn96 and 119–121; that span reads ITN. Substrate contacts are provided by Asn121 and Arg152. His176 serves as the catalytic Proton acceptor.

Belongs to the LDH/MDH superfamily. MDH type 3 family.

The enzyme catalyses (S)-malate + NAD(+) = oxaloacetate + NADH + H(+). In terms of biological role, catalyzes the reversible oxidation of malate to oxaloacetate. This is Malate dehydrogenase from Bartonella henselae (strain ATCC 49882 / DSM 28221 / CCUG 30454 / Houston 1) (Rochalimaea henselae).